A 433-amino-acid chain; its full sequence is Probable phosphoglucosamine mutase (433 aa).

Residue Ser91 is the Phosphoserine intermediate of the active site. Positions 91, 229, 231, and 233 each coordinate Mg(2+). A Phosphoserine modification is found at Ser91.

The protein belongs to the phosphohexose mutase family. The cofactor is Mg(2+). Post-translationally, activated by phosphorylation.

The enzyme catalyses alpha-D-glucosamine 1-phosphate = D-glucosamine 6-phosphate. Catalyzes the conversion of glucosamine-6-phosphate to glucosamine-1-phosphate. In Methanococcoides burtonii (strain DSM 6242 / NBRC 107633 / OCM 468 / ACE-M), this protein is Probable phosphoglucosamine mutase.